The sequence spans 351 residues: Probable dual-specificity RNA methyltransferase RlmN (351 aa).

Catalysis depends on glutamate 92, which acts as the Proton acceptor. Residues 98–334 (SGDRLTVCVS…VRWSKGLGAD (237 aa)) form the Radical SAM core domain. A disulfide bond links cysteine 105 and cysteine 337. Residues cysteine 112, cysteine 116, and cysteine 119 each coordinate [4Fe-4S] cluster. Residues 159-160 (GE), serine 189, 218-220 (SLH), and asparagine 294 each bind S-adenosyl-L-methionine. The active-site S-methylcysteine intermediate is cysteine 337.

This sequence belongs to the radical SAM superfamily. RlmN family. Requires [4Fe-4S] cluster as cofactor.

It is found in the cytoplasm. The enzyme catalyses adenosine(2503) in 23S rRNA + 2 reduced [2Fe-2S]-[ferredoxin] + 2 S-adenosyl-L-methionine = 2-methyladenosine(2503) in 23S rRNA + 5'-deoxyadenosine + L-methionine + 2 oxidized [2Fe-2S]-[ferredoxin] + S-adenosyl-L-homocysteine. It catalyses the reaction adenosine(37) in tRNA + 2 reduced [2Fe-2S]-[ferredoxin] + 2 S-adenosyl-L-methionine = 2-methyladenosine(37) in tRNA + 5'-deoxyadenosine + L-methionine + 2 oxidized [2Fe-2S]-[ferredoxin] + S-adenosyl-L-homocysteine. In terms of biological role, specifically methylates position 2 of adenine 2503 in 23S rRNA and position 2 of adenine 37 in tRNAs. The polypeptide is Probable dual-specificity RNA methyltransferase RlmN (Synechococcus sp. (strain ATCC 27144 / PCC 6301 / SAUG 1402/1) (Anacystis nidulans)).